Consider the following 469-residue polypeptide: MSAEHVLTMLNEHEVKFVDLRFTDTKGKEQHVTIPAHQVNAEFFEEGKMFDGSSIGGWKGINESDMVLMPDASTAVIDPFFADSTLIIRCDILEPGTLQGYDRDPRSIAKRAEDYLRSTGIADTVLFGPEPEFFLFDDIRFGSSISGSHVAIDDIEGAWNSSTQYEGGNKGHRPAVKGGYFPVPPVDSAQDIRSEMCLVMEQMGLVVEAHHHEVATAGQNEVATRFNTMTKKADEIQIYKYVVHNVAHRFGKTATFMPKPMFGDNGSGMHCHMSLSKNGVNLFAGDKYAGLSEQALYYIGGVIKHAKAINALANPTTNSYKRLVPGYEAPVMLAYSARNRSASIRIPVVSSPKARRIEVRFPDPAANPYLCFAALLMAGLDGIKNKIHPGEAMDKNLYDLPPEEAKEIPQVAGSLEEALNELDLDREFLKAGGVFTDEAIDAYIALRREEDDRVRMTPHPVEFELYYSV.

The region spanning 13 to 97 (HEVKFVDLRF…IRCDILEPGT (85 aa)) is the GS beta-grasp domain. The GS catalytic domain occupies 105–469 (PRSIAKRAED…PVEFELYYSV (365 aa)). Residues Glu130 and Glu132 each contribute to the Mg(2+) site. Glu208 contacts ATP. The Mg(2+) site is built by Glu213 and Glu221. L-glutamate contacts are provided by residues 265–266 (NG) and Gly266. His270 contacts Mg(2+). ATP contacts are provided by residues 272-274 (HMS) and Ser274. Residues Arg322, Glu328, and Arg340 each coordinate L-glutamate. ATP is bound by residues Arg340, Arg345, and Lys353. Glu358 is a binding site for Mg(2+). Arg360 is an L-glutamate binding site. O-AMP-tyrosine is present on Tyr398.

Belongs to the glutamine synthetase family. In terms of assembly, oligomer of 12 subunits arranged in the form of two hexameric ring. Requires Mg(2+) as cofactor.

The protein resides in the cytoplasm. It catalyses the reaction L-glutamate + NH4(+) + ATP = L-glutamine + ADP + phosphate + H(+). Its activity is regulated as follows. The activity of this enzyme could be controlled by adenylation under conditions of abundant glutamine. Catalyzes the ATP-dependent biosynthesis of glutamine from glutamate and ammonia. The chain is Glutamine synthetase from Escherichia coli O157:H7.